Here is a 31-residue protein sequence, read N- to C-terminus: U1-theraphotoxin-Cv1a (31 aa).

3 disulfide bridges follow: cysteine 2-cysteine 16, cysteine 9-cysteine 21, and cysteine 15-cysteine 28.

In terms of tissue distribution, expressed by the venom gland.

The protein resides in the secreted. Its function is as follows. Insecticidal toxin that induces reversible paralysis in crickets but not in cockroaches and mice. Molecular target unknown. The sequence is that of U1-theraphotoxin-Cv1a from Coremiocnemis valida (Singapore tarantula).